A 785-amino-acid polypeptide reads, in one-letter code: Conidiophore development regulator abaA (785 aa).

Positions 1-22 (MAEWQTECMLPPTQPGFEGVGP) are disordered. A DNA-binding region (TEA) is located at residues 130 to 204 (GKDGEPVWSD…QVLDSFLKGD (75 aa)). Residues 213–232 (EQPADRSNGQPPSAGPRWRN) form a disordered region.

The protein belongs to the TEC1 family.

The protein localises to the nucleus. Functionally, brlA, abaA and wetA are pivotal regulators of conidiophore development and conidium maturation. They act individually and together to regulate their own expression and that of numerous other sporulation-specific genes. Binds to the sequence 5'-CATTCY-3', where Y is a pyrimidine, making both major- and minor-groove contacts. Controls expression of wetA. This chain is Conidiophore development regulator abaA, found in Aspergillus oryzae (strain ATCC 42149 / RIB 40) (Yellow koji mold).